A 520-amino-acid chain; its full sequence is GMP synthase [glutamine-hydrolyzing] (520 aa).

The region spanning 12–205 (KIIVLDYGSQ…AISICGARGD (194 aa)) is the Glutamine amidotransferase type-1 domain. The active-site Nucleophile is Cys-89. Residues His-179 and Glu-181 contribute to the active site. The region spanning 206–395 (WSMDNFIDME…LGMPDEVVWR (190 aa)) is the GMPS ATP-PPase domain. 233-239 (SGGVDSS) provides a ligand contact to ATP.

Homodimer.

The catalysed reaction is XMP + L-glutamine + ATP + H2O = GMP + L-glutamate + AMP + diphosphate + 2 H(+). It functions in the pathway purine metabolism; GMP biosynthesis; GMP from XMP (L-Gln route): step 1/1. In terms of biological role, catalyzes the synthesis of GMP from XMP. This is GMP synthase [glutamine-hydrolyzing] from Streptococcus equi subsp. zooepidemicus (strain H70).